We begin with the raw amino-acid sequence, 145 residues long: Large ribosomal subunit protein uL13 (145 aa).

It belongs to the universal ribosomal protein uL13 family. In terms of assembly, part of the 50S ribosomal subunit.

In terms of biological role, this protein is one of the early assembly proteins of the 50S ribosomal subunit, although it is not seen to bind rRNA by itself. It is important during the early stages of 50S assembly. This chain is Large ribosomal subunit protein uL13, found in Geobacillus sp. (strain WCH70).